Reading from the N-terminus, the 154-residue chain is Low molecular weight protein-tyrosine-phosphatase PtpA (154 aa).

The active-site Nucleophile is the C8. The active site involves R14. Catalysis depends on D120, which acts as the Proton donor.

The protein belongs to the low molecular weight phosphotyrosine protein phosphatase family. As to quaternary structure, interacts with host CORO1A. Post-translationally, phosphorylations at Tyr-122 and Tyr-123 are essential for phosphatase activity.

Its subcellular location is the secreted. The catalysed reaction is O-phospho-L-tyrosyl-[protein] + H2O = L-tyrosyl-[protein] + phosphate. Functionally, secreted tyrosine phosphatase that plays a critical role during infection as a bacterial effector protein that counteracts host defenses. Required for intramacrophage survival. The sequence is that of Low molecular weight protein-tyrosine-phosphatase PtpA (ptpA) from Staphylococcus aureus (strain bovine RF122 / ET3-1).